Reading from the N-terminus, the 179-residue chain is Large ribosomal subunit protein uL5 (179 aa).

The protein belongs to the universal ribosomal protein uL5 family. As to quaternary structure, part of the 50S ribosomal subunit; part of the 5S rRNA/L5/L18/L25 subcomplex. Contacts the 5S rRNA and the P site tRNA. Forms a bridge to the 30S subunit in the 70S ribosome.

Its function is as follows. This is one of the proteins that bind and probably mediate the attachment of the 5S RNA into the large ribosomal subunit, where it forms part of the central protuberance. In the 70S ribosome it contacts protein S13 of the 30S subunit (bridge B1b), connecting the 2 subunits; this bridge is implicated in subunit movement. Contacts the P site tRNA; the 5S rRNA and some of its associated proteins might help stabilize positioning of ribosome-bound tRNAs. The chain is Large ribosomal subunit protein uL5 from Geobacter sulfurreducens (strain ATCC 51573 / DSM 12127 / PCA).